We begin with the raw amino-acid sequence, 179 residues long: ATP synthase subunit delta (179 aa).

The protein belongs to the ATPase delta chain family. F-type ATPases have 2 components, F(1) - the catalytic core - and F(0) - the membrane proton channel. F(1) has five subunits: alpha(3), beta(3), gamma(1), delta(1), epsilon(1). F(0) has three main subunits: a(1), b(2) and c(10-14). The alpha and beta chains form an alternating ring which encloses part of the gamma chain. F(1) is attached to F(0) by a central stalk formed by the gamma and epsilon chains, while a peripheral stalk is formed by the delta and b chains.

Its subcellular location is the cell inner membrane. F(1)F(0) ATP synthase produces ATP from ADP in the presence of a proton or sodium gradient. F-type ATPases consist of two structural domains, F(1) containing the extramembraneous catalytic core and F(0) containing the membrane proton channel, linked together by a central stalk and a peripheral stalk. During catalysis, ATP synthesis in the catalytic domain of F(1) is coupled via a rotary mechanism of the central stalk subunits to proton translocation. Functionally, this protein is part of the stalk that links CF(0) to CF(1). It either transmits conformational changes from CF(0) to CF(1) or is implicated in proton conduction. In Thermosipho melanesiensis (strain DSM 12029 / CIP 104789 / BI429), this protein is ATP synthase subunit delta.